We begin with the raw amino-acid sequence, 191 residues long: UPF0312 protein Shew185_3055 (191 aa).

The N-terminal stretch at 1–22 (MKKQLLSALIGASLLAPMAASA) is a signal peptide.

This sequence belongs to the UPF0312 family. Type 1 subfamily.

The protein localises to the periplasm. The sequence is that of UPF0312 protein Shew185_3055 from Shewanella baltica (strain OS185).